Consider the following 129-residue polypeptide: Small ribosomal subunit protein uS11 (129 aa).

This sequence belongs to the universal ribosomal protein uS11 family. Part of the 30S ribosomal subunit. Interacts with proteins S7 and S18. Binds to IF-3.

Located on the platform of the 30S subunit, it bridges several disparate RNA helices of the 16S rRNA. Forms part of the Shine-Dalgarno cleft in the 70S ribosome. This is Small ribosomal subunit protein uS11 from Maricaulis maris (strain MCS10) (Caulobacter maris).